Reading from the N-terminus, the 285-residue chain is Putative sugar uptake protein lp_2503 (285 aa).

The next 9 membrane-spanning stretches (helical) occupy residues glycine 2–glycine 21, threonine 31–valine 48, serine 55–glutamine 72, glycine 112–leucine 134, asparagine 147–valine 169, valine 179–phenylalanine 196, asparagine 209–alanine 228, alanine 233–glycine 255, and valine 264–methionine 283.

Belongs to the GRP transporter (TC 2.A.7.5) family.

It localises to the cell membrane. The chain is Putative sugar uptake protein lp_2503 from Lactiplantibacillus plantarum (strain ATCC BAA-793 / NCIMB 8826 / WCFS1) (Lactobacillus plantarum).